A 309-amino-acid polypeptide reads, in one-letter code: MASGYDFGWIPVLLSLFTLTDASSQTVNQELSNIFNELWKLDVNRMEPLTNYNISLQGKAGYIPQGSTNVVDHASSPLFVNVDEAKLSSITTYARFMKLLDNYERSTGVAERVTAEEVTENNSFLDAILETAVMKRAHQYLIGKGKSRSDLRQFKSQLYYMWFRLYHRERNGGEDSSGFEHVFVGETKFGREIMGLHNWVQFYLQEKQNLLDYKGYKARANDVPDADDHVLNVQFSWHGLVKPVASAFVGVSPEFEMAVFTILFLTSTEKTTTAVVNLDEYQLEMVVHRHGRCIGTAYPKLLSSNNRHM.

A signal peptide spans 1–22; sequence MASGYDFGWIPVLLSLFTLTDA. One can recognise an EndoU domain in the interval 27 to 303; the sequence is VNQELSNIFN…IGTAYPKLLS (277 aa). Residues Asn53 and Asn121 are each glycosylated (N-linked (GlcNAc...) asparagine). Active-site residues include His181, His197, and Lys242.

It belongs to the ENDOU family. As to quaternary structure, monomer. It depends on Mn(2+) as a cofactor.

It is found in the secreted. It carries out the reaction ribonucleotidyl-uridine-RNA = a 5'-end dephospho-uridine-RNA + a 3'-end 2',3'-cyclophospho-ribonucleotide-RNA. Its function is as follows. Endoribonuclease that cleaves single-stranded RNAs at 5' of uridylates and releases a product with a 2',3'-cyclic phosphate at the 3'-end. The UU and GU sites are more efficiently cleaved than CU and AU sites. This Danio rerio (Zebrafish) protein is Uridylate-specific endoribonuclease C (endouc).